The following is a 443-amino-acid chain: GTPase Der (443 aa).

EngA-type G domains lie at 3 to 167 (PTLV…PEPE) and 176 to 349 (VRVA…AAAM). GTP-binding positions include 9–16 (GRPNVGKS), 56–60 (DTGGF), 119–122 (NKAE), 182–189 (GRPNVGKS), 229–233 (DTAGM), and 294–297 (NKWD). The KH-like domain occupies 350–434 (AKMTTPRLTR…PLRIQFVTAK (85 aa)).

It belongs to the TRAFAC class TrmE-Era-EngA-EngB-Septin-like GTPase superfamily. EngA (Der) GTPase family. In terms of assembly, associates with the 50S ribosomal subunit.

Its function is as follows. GTPase that plays an essential role in the late steps of ribosome biogenesis. The sequence is that of GTPase Der from Dechloromonas aromatica (strain RCB).